The chain runs to 33 residues: Photosystem II reaction center protein Psb30 (33 aa).

Residues 5–25 (LIVQLGSLTLITLAGPLVVVL) traverse the membrane as a helical segment.

This sequence belongs to the Psb30/Ycf12 family. As to quaternary structure, PSII is composed of 1 copy each of membrane proteins PsbA, PsbB, PsbC, PsbD, PsbE, PsbF, PsbH, PsbI, PsbJ, PsbK, PsbL, PsbM, PsbT, PsbY, PsbZ, Psb30/Ycf12, peripheral proteins of the oxygen-evolving complex and a large number of cofactors. It forms dimeric complexes.

The protein resides in the plastid. Its subcellular location is the chloroplast thylakoid membrane. A core subunit of photosystem II (PSII), probably helps stabilize the reaction center. This Euglena deses protein is Photosystem II reaction center protein Psb30.